The chain runs to 355 residues: 3-dehydroquinate synthase (355 aa).

NAD(+)-binding positions include 71–76 (EGEERK), 105–109 (GVVGD), 129–130 (TS), Lys-142, and Lys-151. Residues Glu-184, His-246, and His-263 each contribute to the Zn(2+) site.

This sequence belongs to the sugar phosphate cyclases superfamily. Dehydroquinate synthase family. Requires NAD(+) as cofactor. Co(2+) is required as a cofactor. The cofactor is Zn(2+).

The protein localises to the cytoplasm. It catalyses the reaction 7-phospho-2-dehydro-3-deoxy-D-arabino-heptonate = 3-dehydroquinate + phosphate. It functions in the pathway metabolic intermediate biosynthesis; chorismate biosynthesis; chorismate from D-erythrose 4-phosphate and phosphoenolpyruvate: step 2/7. In terms of biological role, catalyzes the conversion of 3-deoxy-D-arabino-heptulosonate 7-phosphate (DAHP) to dehydroquinate (DHQ). In Streptococcus pneumoniae serotype 4 (strain ATCC BAA-334 / TIGR4), this protein is 3-dehydroquinate synthase.